The chain runs to 946 residues: Bifunctional glutamine synthetase adenylyltransferase/adenylyl-removing enzyme (946 aa).

Positions 1–441 (MSLLNDAALH…EFNWVIGDDE (441 aa)) are adenylyl removase. The adenylyl transferase stretch occupies residues 448 to 946 (DQALSELWAL…VIKIWEKFLD (499 aa)).

This sequence belongs to the GlnE family. The cofactor is Mg(2+).

The enzyme catalyses [glutamine synthetase]-O(4)-(5'-adenylyl)-L-tyrosine + phosphate = [glutamine synthetase]-L-tyrosine + ADP. It catalyses the reaction [glutamine synthetase]-L-tyrosine + ATP = [glutamine synthetase]-O(4)-(5'-adenylyl)-L-tyrosine + diphosphate. In terms of biological role, involved in the regulation of glutamine synthetase GlnA, a key enzyme in the process to assimilate ammonia. When cellular nitrogen levels are high, the C-terminal adenylyl transferase (AT) inactivates GlnA by covalent transfer of an adenylyl group from ATP to specific tyrosine residue of GlnA, thus reducing its activity. Conversely, when nitrogen levels are low, the N-terminal adenylyl removase (AR) activates GlnA by removing the adenylyl group by phosphorolysis, increasing its activity. The regulatory region of GlnE binds the signal transduction protein PII (GlnB) which indicates the nitrogen status of the cell. The protein is Bifunctional glutamine synthetase adenylyltransferase/adenylyl-removing enzyme of Psychromonas ingrahamii (strain DSM 17664 / CCUG 51855 / 37).